The chain runs to 206 residues: Small ribosomal subunit protein uS4 (206 aa).

The interval 18–44 (NIWGRPKSPVNRREYGPGQHGQRRKGK) is disordered. In terms of domain architecture, S4 RNA-binding spans 94–157 (RRLDAVVYRA…KQLAVVLEAV (64 aa)).

This sequence belongs to the universal ribosomal protein uS4 family. Part of the 30S ribosomal subunit. Contacts protein S5. The interaction surface between S4 and S5 is involved in control of translational fidelity.

Functionally, one of the primary rRNA binding proteins, it binds directly to 16S rRNA where it nucleates assembly of the body of the 30S subunit. With S5 and S12 plays an important role in translational accuracy. The sequence is that of Small ribosomal subunit protein uS4 from Jannaschia sp. (strain CCS1).